Reading from the N-terminus, the 689-residue chain is Solute carrier organic anion transporter family member 1B2 (689 aa).

Residues 1–26 are Cytoplasmic-facing; it reads MDQTQHPSKAAQPLRSEKTRHCDGFR. A helical transmembrane segment spans residues 27–46; it reads IFLAALSFSYICKALGGVIM. The Extracellular portion of the chain corresponds to 47–65; sequence KSSITQIERRFDIPSSISG. A helical transmembrane segment spans residues 66–86; it reads LIDGGFEIGNLLVIVFVSYFG. Residues 87–92 lie on the Cytoplasmic side of the membrane; that stretch reads SKLHRP. Residues 93–117 traverse the membrane as a helical segment; it reads KLIGTGCFIMGIGSILTALPHFFMG. Topologically, residues 118–163 are extracellular; the sequence is YYRYATENDISSLHNSTLTCLVNQTTSLTGTSPEIMEKGCEKGSNS. N132 and N140 each carry an N-linked (GlcNAc...) asparagine glycan. A helical transmembrane segment spans residues 164–192; it reads YTWIYVLMGNMLRGIGETPIVPLGVSYID. Residues 193-211 lie on the Cytoplasmic side of the membrane; the sequence is DFAKEGNSSMYLGTLHTIA. A helical transmembrane segment spans residues 212–232; that stretch reads MIGPILGFIMSSVFAKLYVDV. Over 233 to 250 the chain is Extracellular; it reads GYVDLRSVRITPQDARWV. The chain crosses the membrane as a helical span at residues 251-275; the sequence is GAWWLGFIVNGLLCIICSIPFFFLP. Residues 276–326 are Cytoplasmic-facing; sequence KIPKRSQKERKNSASLHVLKTDEDKNPVTNPTTQEKQAPANLTGFLWSLRS. S288 and S290 each carry phosphoserine. Residues 327 to 348 form a helical membrane-spanning segment; sequence ILTNEQYVIFLILTLLQISSFI. Over 349–368 the chain is Extracellular; the sequence is GSFTYLFKFIEQQFGQTASQ. A helical membrane pass occupies residues 369-392; the sequence is ANFLLGVITIPTMASGMFLGGYLI. The Cytoplasmic segment spans residues 393-396; the sequence is KRLK. Residues 397–420 traverse the membrane as a helical segment; sequence LTLLGITKFVFFTTTMAYVFYLSY. At 421–533 the chain is on the extracellular side; it reads FLLICENKAF…DKCKTKYYFY (113 aa). In terms of domain architecture, Kazal-like spans 448–505; that stretch reads DVPLSYCNSDCICDKNQWEPVCGENGVTYISPCLAGCKSFRGDKKLMNIEFYDCSCVS. Intrachain disulfides connect C454–C484, C460–C480, and C469–C503. Residue N513 is glycosylated (N-linked (GlcNAc...) asparagine). Residues 534-556 form a helical membrane-spanning segment; that stretch reads ITFQVIISFFTALGSTSLMLILI. Residues 557–565 are Cytoplasmic-facing; sequence RSVQPELKS. The chain crosses the membrane as a helical span at residues 566-591; it reads LGMGFHSLVVRTLGGILAPVYYGALI. At 592–625 the chain is on the extracellular side; it reads DRTCMKWSVTSCGARGACRLYNSRLFGMIYVGLS. Residues 626–643 form a helical membrane-spanning segment; sequence IALKTPILLLYVALIYVM. Topologically, residues 644 to 689 are cytoplasmic; the sequence is KRKMKRNDNKILENGRKFTDEGNPEPVNNNGYSCVPSDEKNSETPL. A disordered region spans residues 658-689; it reads GRKFTDEGNPEPVNNNGYSCVPSDEKNSETPL. Phosphothreonine is present on T662. Residue S680 is modified to Phosphoserine. Positions 680–689 are enriched in basic and acidic residues; that stretch reads SDEKNSETPL.

Belongs to the organo anion transporter (TC 2.A.60) family. Liver specific.

The protein localises to the cell membrane. It catalyses the reaction estrone 3-sulfate(out) = estrone 3-sulfate(in). The catalysed reaction is taurocholate(out) = taurocholate(in). It carries out the reaction prostaglandin E2(out) = prostaglandin E2(in). The enzyme catalyses L-thyroxine(out) = L-thyroxine(in). Functionally, mediates the Na(+)-independent uptake of organic anions such as taurochlate, bromosulfophthalein and steroid conjugates (estrone 3-sulfate, 17-beta-glucuronosyl estradiol, dehydroepiandrosterone sulfate). Also transports prostaglandin E2 and L-thyroxine (T4). Shows a pH-sensitive substrate specificity which may be ascribed to the protonation state of the binding site and leads to a stimulation of substrate transport in an acidic microenvironment. Hydrogencarbonate/HCO3(-) acts as the probable counteranion that exchanges for organic anions. This is Solute carrier organic anion transporter family member 1B2 (Slco1b2) from Mus musculus (Mouse).